A 533-amino-acid polypeptide reads, in one-letter code: Probable protein kinase UbiB (533 aa).

A helical transmembrane segment spans residues 24–44; that stretch reads LILELPMLPWWLRLLGATLPW. The Protein kinase domain occupies 126–494; the sequence is RFEREPLASA…WKGSRHDWLG (369 aa). ATP is bound by residues 132 to 140 and K154; that span reads LASASVAQV. D289 functions as the Proton acceptor in the catalytic mechanism. A helical transmembrane segment spans residues 510-530; sequence LGQQLEAWPAWVMLAGGVFLI.

Belongs to the ABC1 family. UbiB subfamily.

It localises to the cell inner membrane. Its pathway is cofactor biosynthesis; ubiquinone biosynthesis [regulation]. Functionally, is probably a protein kinase regulator of UbiI activity which is involved in aerobic coenzyme Q (ubiquinone) biosynthesis. This chain is Probable protein kinase UbiB, found in Pseudomonas aeruginosa (strain UCBPP-PA14).